Reading from the N-terminus, the 467-residue chain is Gamma-aminobutyric acid receptor subunit gamma-3 (467 aa).

A signal peptide spans 1-17 (MAAKLLLLLCLFSGLHA). Topologically, residues 18–256 (RSRRVEEDEN…FELSRRMGYF (239 aa)) are extracellular. N-linked (GlcNAc...) asparagine glycosylation is present at Asn110. A disulfide bond links Cys171 and Cys185. A glycan (N-linked (GlcNAc...) asparagine) is linked at Asn228. The chain crosses the membrane as a helical span at residues 257–277 (TIQTYIPCILTVVLSWVSFWI). Over 278–283 (KKDATP) the chain is Cytoplasmic. The helical transmembrane segment at 284–303 (ARTTLGITTVLTMTTLSTIA) threads the bilayer. Over 304 to 311 (RKSLPRVS) the chain is Extracellular. A helical transmembrane segment spans residues 312–332 (YVTAMDLFVTVCFLFVFAALM). The Cytoplasmic segment spans residues 333 to 446 (EYATLNYYSS…DVSELDSYSR (114 aa)). The chain crosses the membrane as a helical span at residues 447–467 (VFFPTSFLLFNLVYWVGYLYL).

It belongs to the ligand-gated ion channel (TC 1.A.9) family. Gamma-aminobutyric acid receptor (TC 1.A.9.5) subfamily. GABRG3 sub-subfamily. Heteropentamer, formed by a combination of alpha (GABRA1-6), beta (GABRB1-3), gamma (GABRG1-3), delta (GABRD), epsilon (GABRE), rho (GABRR1-3), pi (GABRP) and theta (GABRQ) chains, each subunit exhibiting distinct physiological and pharmacological properties. Post-translationally, may be palmitoylated. Expressed in brain.

It localises to the postsynaptic cell membrane. The protein resides in the cell membrane. It carries out the reaction chloride(in) = chloride(out). Functionally, gamma subunit of the heteropentameric ligand-gated chloride channel gated by gamma-aminobutyric acid (GABA), a major inhibitory neurotransmitter in the brain. GABA-gated chloride channels, also named GABA(A) receptors (GABAAR), consist of five subunits arranged around a central pore and contain GABA active binding site(s) located at the alpha and beta subunit interface(s). When activated by GABA, GABAARs selectively allow the flow of chloride across the cell membrane down their electrochemical gradient. The chain is Gamma-aminobutyric acid receptor subunit gamma-3 from Mus musculus (Mouse).